Consider the following 310-residue polypeptide: Upstream stimulatory factor 1 (310 aa).

Residues 1–17 (MKGQQKTAETEEGTVQI) show a composition bias toward polar residues. Disordered stretches follow at residues 1-26 (MKGQ…ATGE) and 171-209 (QGGS…EVER). A compositionally biased stretch (basic and acidic residues) spans 190-209 (EAPRTTRDEKRRAQHNEVER). A bHLH domain is found at 199-254 (KRRAQHNEVERRRRDKINNWIVQLSKIIPDCSMESTKSGQSKGGILSKACDYIQEL). Residues 271-292 (LQLDNDVLRQQVEDLKNKNLLL) form a leucine-zipper region. A Glycyl lysine isopeptide (Lys-Gly) (interchain with G-Cter in SUMO2) cross-link involves residue Lys-306.

As to quaternary structure, efficient DNA binding requires dimerization with another bHLH protein. Binds DNA as a homodimer or a heterodimer (USF1/USF2). Interacts with varicella-zoster virus IE62 protein.

It localises to the nucleus. Its function is as follows. Transcription factor that binds to a symmetrical DNA sequence (E-boxes) (5'-CACGTG-3') that is found in a variety of viral and cellular promoters. The protein is Upstream stimulatory factor 1 (USF1) of Homo sapiens (Human).